Reading from the N-terminus, the 63-residue chain is Cytochrome c oxidase subunit 5C (63 aa).

A helical membrane pass occupies residues 16–34; it reads VVKEIFIGLTLGLVAGGMW.

Belongs to the cytochrome c oxidase subunit 5C family.

Its subcellular location is the mitochondrion inner membrane. Its function is as follows. This protein is one of the nuclear-coded polypeptide chains of cytochrome c oxidase, the terminal oxidase in mitochondrial electron transport. The sequence is that of Cytochrome c oxidase subunit 5C (COX5C) from Hordeum vulgare (Barley).